Reading from the N-terminus, the 645-residue chain is Acetyl-coenzyme A synthetase (645 aa).

CoA contacts are provided by residues 190–193 (RGGR) and threonine 309. ATP contacts are provided by residues 385 to 387 (GEP), 409 to 414 (DTWWQT), aspartate 498, and arginine 513. Position 521 (serine 521) interacts with CoA. Arginine 524 contacts ATP. Residues valine 535, histidine 537, and valine 540 each contribute to the Mg(2+) site. Residue arginine 582 participates in CoA binding. Lysine 607 carries the post-translational modification N6-acetyllysine.

This sequence belongs to the ATP-dependent AMP-binding enzyme family. Mg(2+) is required as a cofactor. In terms of processing, acetylated. Deacetylation by the SIR2-homolog deacetylase activates the enzyme.

The enzyme catalyses acetate + ATP + CoA = acetyl-CoA + AMP + diphosphate. In terms of biological role, catalyzes the conversion of acetate into acetyl-CoA (AcCoA), an essential intermediate at the junction of anabolic and catabolic pathways. AcsA undergoes a two-step reaction. In the first half reaction, AcsA combines acetate with ATP to form acetyl-adenylate (AcAMP) intermediate. In the second half reaction, it can then transfer the acetyl group from AcAMP to the sulfhydryl group of CoA, forming the product AcCoA. The sequence is that of Acetyl-coenzyme A synthetase from Methylocella silvestris (strain DSM 15510 / CIP 108128 / LMG 27833 / NCIMB 13906 / BL2).